We begin with the raw amino-acid sequence, 208 residues long: Small ribosomal subunit protein uS5 (208 aa).

One can recognise an S5 DRBM domain in the interval Leu-28–Val-91.

This sequence belongs to the universal ribosomal protein uS5 family. As to quaternary structure, part of the 30S ribosomal subunit. Contacts proteins S4 and S8.

Its function is as follows. With S4 and S12 plays an important role in translational accuracy. Functionally, located at the back of the 30S subunit body where it stabilizes the conformation of the head with respect to the body. The sequence is that of Small ribosomal subunit protein uS5 from Aquifex aeolicus (strain VF5).